The following is a 356-amino-acid chain: Histidinol-phosphate aminotransferase (356 aa).

Lys-214 is subject to N6-(pyridoxal phosphate)lysine.

Belongs to the class-II pyridoxal-phosphate-dependent aminotransferase family. Histidinol-phosphate aminotransferase subfamily. In terms of assembly, homodimer. Pyridoxal 5'-phosphate serves as cofactor.

It carries out the reaction L-histidinol phosphate + 2-oxoglutarate = 3-(imidazol-4-yl)-2-oxopropyl phosphate + L-glutamate. The protein operates within amino-acid biosynthesis; L-histidine biosynthesis; L-histidine from 5-phospho-alpha-D-ribose 1-diphosphate: step 7/9. This is Histidinol-phosphate aminotransferase from Aromatoleum aromaticum (strain DSM 19018 / LMG 30748 / EbN1) (Azoarcus sp. (strain EbN1)).